The following is a 292-amino-acid chain: 2,3-dihydroxybenzoate decarboxylase (292 aa).

The active site involves cysteine 263.

Belongs to the metallo-dependent hydrolases superfamily. In terms of assembly, homotetramer.

The enzyme catalyses 2,3-dihydroxybenzoate + H(+) = catechol + CO2. The protein operates within aromatic compound metabolism; benzoate degradation via hydroxylation. This chain is 2,3-dihydroxybenzoate decarboxylase, found in Aspergillus niger.